A 104-amino-acid polypeptide reads, in one-letter code: Large ribosomal subunit protein bL21 (104 aa).

Belongs to the bacterial ribosomal protein bL21 family. In terms of assembly, part of the 50S ribosomal subunit. Contacts protein L20.

Functionally, this protein binds to 23S rRNA in the presence of protein L20. The protein is Large ribosomal subunit protein bL21 of Streptococcus agalactiae serotype Ia (strain ATCC 27591 / A909 / CDC SS700).